A 551-amino-acid chain; its full sequence is E3 SUMO-protein ligase CBX4 (551 aa).

Residues Phe11–Tyr69 form the Chromo domain. Residues Lys77, Lys106, Lys114, and Lys125 each participate in a glycyl lysine isopeptide (Lys-Gly) (interchain with G-Cter in SUMO2) cross-link. The tract at residues Lys125 to Tyr152 is disordered. N6-acetyllysine; alternate is present on Lys149. Residue Lys149 forms a Glycyl lysine isopeptide (Lys-Gly) (interchain with G-Cter in SUMO2); alternate linkage. Residues Lys157, Lys167, and Lys178 each participate in a glycyl lysine isopeptide (Lys-Gly) (interchain with G-Cter in SUMO2) cross-link. The segment at Gln172 to His193 is disordered. Ser182 is modified (phosphoserine). Glycyl lysine isopeptide (Lys-Gly) (interchain with G-Cter in SUMO2) cross-links involve residues Lys191, Lys205, Lys212, Lys223, Lys249, Lys268, Lys278, and Lys280. The tract at residues Gly216–Asn244 is disordered. Composition is skewed to basic and acidic residues over residues Ser281–Ser291, Ala298–Phe310, and Ser317–Glu332. 2 disordered regions span residues Ser281–Leu399 and Thr430–Ala451. Residues Lys321, Lys353, and Lys366 each participate in a glycyl lysine isopeptide (Lys-Gly) (interchain with G-Cter in SUMO2) cross-link. Residues Pro381–Thr396 are compositionally biased toward basic residues. Ser463 is modified (phosphoserine). A Glycyl lysine isopeptide (Lys-Gly) (interchain with G-Cter in SUMO2); alternate cross-link involves residue Lys490. Lys490 is covalently cross-linked (Glycyl lysine isopeptide (Lys-Gly) (interchain with G-Cter in SUMO); alternate).

In terms of assembly, interacts with SUV39H1 and HIPK2. Interacts with CSNK2B. Component of a PRC1-like complex. The composition of the PRC1 complex differs between the PRC1 complex in pluripotent embryonic stem cells containing RNF2, CBX7 and PCGF2, and the PRC1 complex in differentiating cells containing RNF2, CBX2, CBX4 and BMI1. Interacts with RNF2. Interacts (via chromodomain) with histone H3K9Me3 and single-stranded RNA (ssRNA). Interacts with CHTOP. May interact with H3C15 and H3C1. Interacts with PRDM1. In terms of processing, ubiquitinated. Ubiquitination regulates the function of the Polycomb group (PcG) multiprotein PRC1-like complex. Deubiquitinated by USP26. In terms of tissue distribution, expressed in embryoid bodies.

The protein localises to the nucleus. It localises to the nucleus speckle. It functions in the pathway protein modification; protein sumoylation. E3 SUMO-protein ligase that catalyzes sumoylation of target proteins by promoting the transfer of SUMO from the E2 enzyme to the substrate. Involved in the sumoylation of HNRNPK, a p53/TP53 transcriptional coactivator, hence indirectly regulates p53/TP53 transcriptional activation resulting in p21/CDKN1A expression. Functionally, component of a Polycomb group (PcG) multiprotein PRC1-like complex, a complex class required to maintain the transcriptionally repressive state of many genes, including Hox genes, throughout development. PcG PRC1 complex acts via chromatin remodeling and modification of histones; it mediates monoubiquitination of histone H2A 'Lys-119', rendering chromatin heritably changed in its expressibility. Binds to histone H3 trimethylated at 'Lys-9' (H3K9me3). Plays a role in the lineage differentiation of the germ layers in embryonic development. The chain is E3 SUMO-protein ligase CBX4 (Cbx4) from Mus musculus (Mouse).